Reading from the N-terminus, the 132-residue chain is Small ribosomal subunit protein uS8c (132 aa).

Belongs to the universal ribosomal protein uS8 family. In terms of assembly, part of the 30S ribosomal subunit.

The protein resides in the plastid. It localises to the chloroplast. Its function is as follows. One of the primary rRNA binding proteins, it binds directly to 16S rRNA central domain where it helps coordinate assembly of the platform of the 30S subunit. In Phaeodactylum tricornutum (strain CCAP 1055/1), this protein is Small ribosomal subunit protein uS8c (rps8).